We begin with the raw amino-acid sequence, 271 residues long: Tryptophan synthase alpha chain (271 aa).

Catalysis depends on proton acceptor residues glutamate 49 and aspartate 60.

The protein belongs to the TrpA family. In terms of assembly, tetramer of two alpha and two beta chains.

It carries out the reaction (1S,2R)-1-C-(indol-3-yl)glycerol 3-phosphate + L-serine = D-glyceraldehyde 3-phosphate + L-tryptophan + H2O. It functions in the pathway amino-acid biosynthesis; L-tryptophan biosynthesis; L-tryptophan from chorismate: step 5/5. Its function is as follows. The alpha subunit is responsible for the aldol cleavage of indoleglycerol phosphate to indole and glyceraldehyde 3-phosphate. This Buchnera aphidicola subsp. Schizaphis graminum (strain Sg) protein is Tryptophan synthase alpha chain.